A 518-amino-acid chain; its full sequence is ATP synthase subunit alpha (518 aa).

169 to 176 (GDRKTGKT) is an ATP binding site.

The protein belongs to the ATPase alpha/beta chains family. In terms of assembly, F-type ATPases have 2 components, CF(1) - the catalytic core - and CF(0) - the membrane proton channel. CF(1) has five subunits: alpha(3), beta(3), gamma(1), delta(1), epsilon(1). CF(0) has three main subunits: a(1), b(2) and c(9-12). The alpha and beta chains form an alternating ring which encloses part of the gamma chain. CF(1) is attached to CF(0) by a central stalk formed by the gamma and epsilon chains, while a peripheral stalk is formed by the delta and b chains.

It localises to the cell membrane. It catalyses the reaction ATP + H2O + 4 H(+)(in) = ADP + phosphate + 5 H(+)(out). Functionally, produces ATP from ADP in the presence of a proton gradient across the membrane. The alpha chain is a regulatory subunit. The polypeptide is ATP synthase subunit alpha (Enterococcus hirae (strain ATCC 9790 / DSM 20160 / JCM 8729 / LMG 6399 / NBRC 3181 / NCIMB 6459 / NCDO 1258 / NCTC 12367 / WDCM 00089 / R)).